Consider the following 138-residue polypeptide: Acidic phospholipase A2 VpaPLA2 (138 aa).

A signal peptide spans 1–16 (MRTLWIVAVCLMGVEG). 7 cysteine pairs are disulfide-bonded: Cys42–Cys131, Cys44–Cys60, Cys59–Cys111, Cys65–Cys138, Cys66–Cys104, Cys73–Cys97, and Cys91–Cys102. Ca(2+) is bound by residues Tyr43, Gly45, and Gly47. Residue His63 is part of the active site. Position 64 (Asp64) interacts with Ca(2+). Residue Asp105 is part of the active site.

This sequence belongs to the phospholipase A2 family. Group II subfamily. D49 sub-subfamily. Ca(2+) is required as a cofactor. Expressed by the venom gland.

It is found in the secreted. The enzyme catalyses a 1,2-diacyl-sn-glycero-3-phosphocholine + H2O = a 1-acyl-sn-glycero-3-phosphocholine + a fatty acid + H(+). In terms of biological role, snake venom phospholipase A2 (PLA2) that causes a sudden decrease of arterial blood pressure when injected into rat, but is not lethal. When co-injected with an uncharacterized basic protein (which did not show any enzymatic activity, but also causes a drop in blood pressure), this synergistical mixture is lethal. PLA2 catalyzes the calcium-dependent hydrolysis of the 2-acyl groups in 3-sn-phosphoglycerides. This chain is Acidic phospholipase A2 VpaPLA2, found in Daboia palaestinae (Palestine viper).